We begin with the raw amino-acid sequence, 69 residues long: Large ribosomal subunit protein bL31 (69 aa).

Zn(2+) is bound by residues C16, C18, C37, and C40.

Belongs to the bacterial ribosomal protein bL31 family. Type A subfamily. In terms of assembly, part of the 50S ribosomal subunit. Zn(2+) is required as a cofactor.

In terms of biological role, binds the 23S rRNA. In Teredinibacter turnerae (strain ATCC 39867 / T7901), this protein is Large ribosomal subunit protein bL31.